The chain runs to 198 residues: ATP-dependent Clp protease proteolytic subunit (198 aa).

Residue Ser98 is the Nucleophile of the active site. His123 is an active-site residue.

The protein belongs to the peptidase S14 family. As to quaternary structure, fourteen ClpP subunits assemble into 2 heptameric rings which stack back to back to give a disk-like structure with a central cavity, resembling the structure of eukaryotic proteasomes.

The protein localises to the cytoplasm. It catalyses the reaction Hydrolysis of proteins to small peptides in the presence of ATP and magnesium. alpha-casein is the usual test substrate. In the absence of ATP, only oligopeptides shorter than five residues are hydrolyzed (such as succinyl-Leu-Tyr-|-NHMec, and Leu-Tyr-Leu-|-Tyr-Trp, in which cleavage of the -Tyr-|-Leu- and -Tyr-|-Trp bonds also occurs).. Its function is as follows. Cleaves peptides in various proteins in a process that requires ATP hydrolysis. Has a chymotrypsin-like activity. Plays a major role in the degradation of misfolded proteins. The sequence is that of ATP-dependent Clp protease proteolytic subunit from Bacillus pumilus (strain SAFR-032).